Here is a 63-residue protein sequence, read N- to C-terminus: U-reduvitoxin-Pr9a (63 aa).

A signal peptide spans 1–19 (MRFFSLFTFLVAFIAAALA). The propeptide occupies 20–42 (APVEIGEDLFALRPTGAKRDIIL). Residues Cys47 and Cys60 are joined by a disulfide bond.

As to expression, expressed by the venom gland.

It is found in the secreted. In Platymeris rhadamanthus (Red spot assassin bug), this protein is U-reduvitoxin-Pr9a.